Consider the following 228-residue polypeptide: Apoptosis regulator R1 (228 aa).

A compositionally biased stretch (basic and acidic residues) spans 1 to 21; it reads LNPKKKENNGVKNGDREKQHE. Residues 1–29 are disordered; it reads LNPKKKENNGVKNGDREKQHETGNTIFRG. Residues 120–139 carry the BH1 motif; sequence SLFQGGVNWGRIVAFFVFGA. Residues 171 to 186 carry the BH2 motif; it reads DWIQSNGGWNGFLTLY. A helical membrane pass occupies residues 207 to 227; that stretch reads TVLTGAVALGALMTVGALFAS.

The protein belongs to the Bcl-2 family.

It localises to the membrane. Its function is as follows. Could be the homolog of mammalian Bcl-W. This Xenopus laevis (African clawed frog) protein is Apoptosis regulator R1.